The following is a 120-amino-acid chain: Large ribosomal subunit protein uL18 (120 aa).

It belongs to the universal ribosomal protein uL18 family. Part of the 50S ribosomal subunit; part of the 5S rRNA/L5/L18/L25 subcomplex. Contacts the 5S and 23S rRNAs.

Functionally, this is one of the proteins that bind and probably mediate the attachment of the 5S RNA into the large ribosomal subunit, where it forms part of the central protuberance. In Rhodopseudomonas palustris (strain BisB18), this protein is Large ribosomal subunit protein uL18.